Consider the following 84-residue polypeptide: Cell division topological specificity factor (84 aa).

The protein belongs to the MinE family.

Its function is as follows. Prevents the cell division inhibition by proteins MinC and MinD at internal division sites while permitting inhibition at polar sites. This ensures cell division at the proper site by restricting the formation of a division septum at the midpoint of the long axis of the cell. The polypeptide is Cell division topological specificity factor (Burkholderia cenocepacia (strain ATCC BAA-245 / DSM 16553 / LMG 16656 / NCTC 13227 / J2315 / CF5610) (Burkholderia cepacia (strain J2315))).